Reading from the N-terminus, the 262-residue chain is Ribose-5-phosphate isomerase A (262 aa).

Residues 33–36 (TGST), 89–92 (DGAD), and 102–105 (KGGG) each bind substrate. Catalysis depends on Glu-111, which acts as the Proton acceptor. Substrate is bound at residue Lys-129.

Belongs to the ribose 5-phosphate isomerase family. Homodimer.

It catalyses the reaction aldehydo-D-ribose 5-phosphate = D-ribulose 5-phosphate. The protein operates within carbohydrate degradation; pentose phosphate pathway; D-ribose 5-phosphate from D-ribulose 5-phosphate (non-oxidative stage): step 1/1. Functionally, catalyzes the reversible conversion of ribose-5-phosphate to ribulose 5-phosphate. The chain is Ribose-5-phosphate isomerase A from Ruegeria sp. (strain TM1040) (Silicibacter sp.).